The sequence spans 416 residues: UDP-N-acetylglucosamine 1-carboxyvinyltransferase (416 aa).

22–23 is a binding site for phosphoenolpyruvate; sequence KN. R92 provides a ligand contact to UDP-N-acetyl-alpha-D-glucosamine. Catalysis depends on C116, which acts as the Proton donor. C116 bears the 2-(S-cysteinyl)pyruvic acid O-phosphothioketal mark. UDP-N-acetyl-alpha-D-glucosamine contacts are provided by residues 121–125, D304, and I326; that span reads RPVDQ.

The protein belongs to the EPSP synthase family. MurA subfamily.

The protein resides in the cytoplasm. The enzyme catalyses phosphoenolpyruvate + UDP-N-acetyl-alpha-D-glucosamine = UDP-N-acetyl-3-O-(1-carboxyvinyl)-alpha-D-glucosamine + phosphate. It participates in cell wall biogenesis; peptidoglycan biosynthesis. Its function is as follows. Cell wall formation. Adds enolpyruvyl to UDP-N-acetylglucosamine. This Cupriavidus necator (strain ATCC 17699 / DSM 428 / KCTC 22496 / NCIMB 10442 / H16 / Stanier 337) (Ralstonia eutropha) protein is UDP-N-acetylglucosamine 1-carboxyvinyltransferase.